Here is a 312-residue protein sequence, read N- to C-terminus: Glutathione synthetase (312 aa).

In terms of domain architecture, ATP-grasp spans 125-309 (KIFVTEFPDL…IAALFWDAVE (185 aa)). 151-207 (RREFGDIILKPLYGNGGAGVFHLADGDRNLTSLLEMFGQLFREPFIAQRYLKDVRAG) is a binding site for ATP. Mg(2+)-binding residues include Glu280 and Asn282.

This sequence belongs to the prokaryotic GSH synthase family. Mg(2+) serves as cofactor. Mn(2+) is required as a cofactor.

The enzyme catalyses gamma-L-glutamyl-L-cysteine + glycine + ATP = glutathione + ADP + phosphate + H(+). Its pathway is sulfur metabolism; glutathione biosynthesis; glutathione from L-cysteine and L-glutamate: step 2/2. This chain is Glutathione synthetase, found in Brucella melitensis biotype 1 (strain ATCC 23456 / CCUG 17765 / NCTC 10094 / 16M).